The chain runs to 353 residues: C-X-C chemokine receptor type 4 (353 aa).

The tract at residues 1–22 (MDGFRIYPSDNYTEDDLGSGDY) is important for chemokine binding and signaling. The Extracellular portion of the chain corresponds to 1 to 39 (MDGFRIYPSDNYTEDDLGSGDYDSMKEPCFREENAHFNR). Tyr-7 bears the Sulfotyrosine mark. Asn-11 carries N-linked (GlcNAc...) asparagine glycosylation. Tyr-12 carries the post-translational modification Sulfotyrosine. Residue Ser-19 is glycosylated (O-linked (Xyl...) (chondroitin sulfate) serine). Tyr-22 bears the Sulfotyrosine mark. Disulfide bonds link Cys-29–Cys-275 and Cys-110–Cys-187. Residues 40–64 (IFLPTVYSIIFLTGIVGNGLVILVM) form a helical membrane-spanning segment. Over 65–78 (GYQKKLRSMTDKYR) the chain is Cytoplasmic. A helical membrane pass occupies residues 79–100 (LHLSVADLLFVLTLPFWAVDAV). Positions 95–98 (WAVD) are chemokine binding. Topologically, residues 101 to 111 (ANWYFGKFLCK) are extracellular. The helical transmembrane segment at 112–131 (AVHVIYTVNLYSSVLILAFI) threads the bilayer. A chemokine binding region spans residues 114-118 (HVIYT). The Cytoplasmic portion of the chain corresponds to 132 to 155 (SLDRYLAIVHATNSQRPRKLLAEK). The Important for signaling motif lies at 134-136 (DRY). Positions 136 to 148 (YLAIVHATNSQRP) are involved in dimerization; when bound to chemokine. The helical transmembrane segment at 156-175 (VVYVGVWIPALLLTIPDFIF) threads the bilayer. Residues 176-196 (ANVREADGRYICDRFYPSDSW) lie on the Extracellular side of the membrane. Residues 187-191 (CDRFY) are chemokine binding, important for signaling. The involved in dimerization stretch occupies residues 192–211 (PSDSWLVVFQFQHIMVGLIL). A helical membrane pass occupies residues 197–217 (LVVFQFQHIMVGLILPGIVIL). The Cytoplasmic segment spans residues 218-242 (SCYCIIISKLSHSKGYQKRKALKTT). Residues 243–262 (VILILAFFACWLPYYIGISI) traverse the membrane as a helical segment. Residues 263-283 (DSFILLEIIKQGCEFESTVHK) are Extracellular-facing. The interval 267-269 (LLE) is involved in dimerization. The helical transmembrane segment at 284 to 303 (WISITEALAFFHCCLNPILY) threads the bilayer. Residues 304 to 353 (AFLGAKFKTSAQHALTSVSRGSSLKILSKGKRGGHSSVSTESESSSFHSS) are Cytoplasmic-facing. 2 positions are modified to phosphoserine: Ser-320 and Ser-322. A phosphoserine; by PKC and GRK6 mark is found at Ser-325 and Ser-326. The tract at residues 330-353 (LSKGKRGGHSSVSTESESSSFHSS) is disordered. Residue Ser-331 is modified to Phosphoserine; by GRK6. Lys-332 is covalently cross-linked (Glycyl lysine isopeptide (Lys-Gly) (interchain with G-Cter in ubiquitin)). Low complexity predominate over residues 338 to 353 (HSSVSTESESSSFHSS). Phosphoserine; by GRK6 is present on Ser-340. Ser-349 and Ser-352 each carry phosphoserine.

It belongs to the G-protein coupled receptor 1 family. In terms of assembly, monomer. Can form homodimers. Interacts with CD164. Interacts with ARRB2; the interaction is dependent on the C-terminal phosphorylation of CXCR4 and allows activation of MAPK1 and MAPK3. Interacts with ARR3; the interaction is dependent on the C-terminal phosphorylation of CXCR4 and modulates calcium mobilization. Interacts with RNF113A; the interaction, enhanced by CXCL12, promotes CXCR4 ubiquitination and subsequent degradation. Interacts (via the cytoplasmic C-terminal) with ITCH (via the WW domains I and II); the interaction, enhanced by CXCL12, promotes CXCR4 ubiquitination and leads to its degradation. Interacts with extracellular ubiquitin. Interacts with DBN1; this interaction is enhanced by antigenic stimulation. Following LPS binding, may form a complex with GDF5, HSP90AA1 and HSPA8. Post-translationally, phosphorylated on agonist stimulation. Rapidly phosphorylated on serine and threonine residues in the C-terminal. Phosphorylation at Ser-325 and Ser-326 leads to recruitment of ITCH, ubiquitination and protein degradation. Ubiquitinated after ligand binding, leading to its degradation. Ubiquitinated by ITCH at the cell membrane on agonist stimulation. The ubiquitin-dependent mechanism, endosomal sorting complex required for transport (ESCRT), then targets CXCR4 for lysosomal degradation. This process is dependent also on prior Ser-/Thr-phosphorylation in the C-terminal of CXCR4. Also binding of ARRB1 to STAM negatively regulates CXCR4 sorting to lysosomes though modulating ubiquitination of SFR5S. In terms of processing, sulfation is required for efficient binding of CXCL12/SDF-1alpha and promotes its dimerization. Post-translationally, O- and N-glycosylated. N-glycosylation can mask coreceptor function. The O-glycosylation chondroitin sulfate attachment does not affect interaction with CXCL12/SDF-1alpha nor its coreceptor activity.

It localises to the cell membrane. It is found in the cell junction. The protein resides in the early endosome. The protein localises to the late endosome. Its subcellular location is the lysosome. In terms of biological role, receptor for the C-X-C chemokine CXCL12/SDF-1 that transduces a signal by increasing intracellular calcium ion levels and enhancing MAPK1/MAPK3 activation. Involved in the AKT signaling cascade. Plays a role in regulation of cell migration, e.g. during wound healing. Acts as a receptor for extracellular ubiquitin; leading to enhanced intracellular calcium ions and reduced cellular cAMP levels. Binds bacterial lipopolysaccharide (LPS) et mediates LPS-induced inflammatory response, including TNF secretion by monocytes. Involved in hematopoiesis and in cardiac ventricular septum formation. Also plays an essential role in vascularization of the gastrointestinal tract, probably by regulating vascular branching and/or remodeling processes in endothelial cells. Involved in cerebellar development. In the CNS, could mediate hippocampal-neuron survival. The polypeptide is C-X-C chemokine receptor type 4 (CXCR4) (Felis catus (Cat)).